Here is a 546-residue protein sequence, read N- to C-terminus: Chaperonin GroEL (546 aa).

ATP is bound by residues 30–33, Lys-51, 87–91, Gly-415, and Asp-495; these read TLGP and DGTTT.

Belongs to the chaperonin (HSP60) family. Forms a cylinder of 14 subunits composed of two heptameric rings stacked back-to-back. Interacts with the co-chaperonin GroES.

It is found in the cytoplasm. The enzyme catalyses ATP + H2O + a folded polypeptide = ADP + phosphate + an unfolded polypeptide.. In terms of biological role, together with its co-chaperonin GroES, plays an essential role in assisting protein folding. The GroEL-GroES system forms a nano-cage that allows encapsulation of the non-native substrate proteins and provides a physical environment optimized to promote and accelerate protein folding. The polypeptide is Chaperonin GroEL (Brucella melitensis biotype 2 (strain ATCC 23457)).